A 515-amino-acid polypeptide reads, in one-letter code: ATP-dependent rRNA helicase rrp-3 (515 aa).

A disordered region spans residues 1-85 (MSTKRRKTSD…LDVAPEQEEV (85 aa)). The segment covering 15–24 (LKKAAAPSAP) has biased composition (low complexity). The segment covering 25 to 55 (ELKKEKKVKDKSTKDKSSTKKTEKTEKKQDA) has biased composition (basic and acidic residues). The span at 69 to 85 (TEEDSVTLDVAPEQEEV) shows a compositional bias: acidic residues. The Q motif signature appears at 90–118 (KTFKDLGIVDALCEACERLGYKNPTPIQE). Positions 121–292 (IPLALQNRDI…RASLRDPLKV (172 aa)) constitute a Helicase ATP-binding domain. Residue 134 to 141 (AETGSGKT) coordinates ATP. The DEAD box signature appears at 240 to 243 (DEAD). The Helicase C-terminal domain occupies 316–464 (HKDTYLVYLC…EYPLEKDEVM (149 aa)). The disordered stretch occupies residues 482–515 (KSLMENQGKHGGLLKRKRGNGQGGGRDHMDAEEG). The span at 506-515 (GRDHMDAEEG) shows a compositional bias: basic and acidic residues.

It belongs to the DEAD box helicase family. DDX47/RRP3 subfamily.

The protein localises to the nucleus. Its function is as follows. Required for pre-ribosomal RNA processing. Involved in the maturation of the 35S-pre-rRNA and to its cleavage to mature 18S rRNA. The polypeptide is ATP-dependent rRNA helicase rrp-3 (rrp-3) (Neurospora crassa (strain ATCC 24698 / 74-OR23-1A / CBS 708.71 / DSM 1257 / FGSC 987)).